An 858-amino-acid polypeptide reads, in one-letter code: Cone cGMP-specific 3',5'-cyclic phosphodiesterase subunit alpha' (858 aa).

GAF domains lie at 75-224 (TPEQ…SIIL) and 256-433 (DVER…GWSL). Residues Ser-97, Asp-116, 169 to 172 (DKQT), and Thr-176 each bind 3',5'-cyclic GMP. Residues 486-819 (EEKQLVAILK…VEWKSLADEY (334 aa)) enclose the PDEase domain. His-562 acts as the Proton donor in catalysis. Residues His-566, His-602, Asp-603, and Asp-723 each contribute to the a divalent metal cation site. Basic and acidic residues predominate over residues 830-852 (AKKQEGGAEKAAEDSGGGDDKKS). The segment at 830 to 858 (AKKQEGGAEKAAEDSGGGDDKKSKTCLML) is disordered. Cys-855 carries the cysteine methyl ester modification. Cys-855 carries the S-geranylgeranyl cysteine lipid modification. The propeptide at 856–858 (LML) is removed in mature form.

This sequence belongs to the cyclic nucleotide phosphodiesterase family. Composed of two alpha' subunits that are associated with 3 smaller proteins of 11, 13, and 15 kDa. It depends on a divalent metal cation as a cofactor.

It is found in the cell membrane. The enzyme catalyses 3',5'-cyclic GMP + H2O = GMP + H(+). Functionally, as cone-specific cGMP phosphodiesterase, it plays an essential role in light detection and cone phototransduction by rapidly decreasing intracellular levels of cGMP. The polypeptide is Cone cGMP-specific 3',5'-cyclic phosphodiesterase subunit alpha' (PDE6C) (Homo sapiens (Human)).